The sequence spans 376 residues: Succinyl-diaminopimelate desuccinylase (376 aa).

Zn(2+) is bound at residue His66. Asp68 is a catalytic residue. Asp99 lines the Zn(2+) pocket. Glu133 functions as the Proton acceptor in the catalytic mechanism. Zn(2+) is bound by residues Glu134, Glu162, and His348.

The protein belongs to the peptidase M20A family. DapE subfamily. As to quaternary structure, homodimer. It depends on Zn(2+) as a cofactor. The cofactor is Co(2+).

The enzyme catalyses N-succinyl-(2S,6S)-2,6-diaminopimelate + H2O = (2S,6S)-2,6-diaminopimelate + succinate. It participates in amino-acid biosynthesis; L-lysine biosynthesis via DAP pathway; LL-2,6-diaminopimelate from (S)-tetrahydrodipicolinate (succinylase route): step 3/3. In terms of biological role, catalyzes the hydrolysis of N-succinyl-L,L-diaminopimelic acid (SDAP), forming succinate and LL-2,6-diaminopimelate (DAP), an intermediate involved in the bacterial biosynthesis of lysine and meso-diaminopimelic acid, an essential component of bacterial cell walls. The polypeptide is Succinyl-diaminopimelate desuccinylase (Xanthomonas oryzae pv. oryzae (strain PXO99A)).